The sequence spans 447 residues: Probable glycine dehydrogenase (decarboxylating) subunit 1 (447 aa).

This sequence belongs to the GcvP family. N-terminal subunit subfamily. In terms of assembly, the glycine cleavage system is composed of four proteins: P, T, L and H. In this organism, the P 'protein' is a heterodimer of two subunits.

It carries out the reaction N(6)-[(R)-lipoyl]-L-lysyl-[glycine-cleavage complex H protein] + glycine + H(+) = N(6)-[(R)-S(8)-aminomethyldihydrolipoyl]-L-lysyl-[glycine-cleavage complex H protein] + CO2. Its function is as follows. The glycine cleavage system catalyzes the degradation of glycine. The P protein binds the alpha-amino group of glycine through its pyridoxal phosphate cofactor; CO(2) is released and the remaining methylamine moiety is then transferred to the lipoamide cofactor of the H protein. This chain is Probable glycine dehydrogenase (decarboxylating) subunit 1, found in Bacillus cytotoxicus (strain DSM 22905 / CIP 110041 / 391-98 / NVH 391-98).